The sequence spans 202 residues: Probable septum site-determining protein MinC (202 aa).

It belongs to the MinC family. In terms of assembly, interacts with MinD and FtsZ.

Functionally, cell division inhibitor that blocks the formation of polar Z ring septums. Rapidly oscillates between the poles of the cell to destabilize FtsZ filaments that have formed before they mature into polar Z rings. Prevents FtsZ polymerization. The chain is Probable septum site-determining protein MinC from Sulfurihydrogenibium sp. (strain YO3AOP1).